A 390-amino-acid chain; its full sequence is Putative MSV199 domain-containing protein 211L (390 aa).

Residues 181 to 263 (HDRKAQEEKE…FDLSDVRDRL (83 aa)) adopt a coiled-coil conformation.

The chain is Putative MSV199 domain-containing protein 211L from Acheta domesticus (House cricket).